Consider the following 466-residue polypeptide: MAKTLYEKLFDAHVVYEAENETPLLYIDRHLVHEVTSPQAFDGLRAHGRPVRQPGKTFATMDHNVSTQTKDINACGEMARIQMQELIKNCKEFGVELYDLNHPYQGIVHVMGPEQGVTLPGMTIVCGDSHTATHGAFGALAFGIGTSEVEHVLATQTLKQGRAKTMKIEVQGKAAPGITAKDIVLAIIGKTGSAGGTGHVVEFCGEAIRDLSMEGRMTLCNMAIEMGAKAGLVAPDETTFNYVKGRLHAPKGKDFDDAVAYWKTLQTDEGATFDTVVTLRAEEISPQVTWGTNPGQVISVNDNIPDPASFADPVERASAEKALAYMGLKPGIPLTEVAIDKVFIGSCTNSRIEDLRAAAEIAKGRKVAPGVQALVVPGSGPVKAQAEAEGLDKIFIEAGFEWRLPGCSMCLAMNNDRLNPGERCASTSNRNFEGRQGRGGRTHLVSPAMAAAAAVTGHFADIRNIK.

Positions 347, 407, and 410 each coordinate [4Fe-4S] cluster.

The protein belongs to the aconitase/IPM isomerase family. LeuC type 1 subfamily. In terms of assembly, heterodimer of LeuC and LeuD. Requires [4Fe-4S] cluster as cofactor.

The catalysed reaction is (2R,3S)-3-isopropylmalate = (2S)-2-isopropylmalate. The protein operates within amino-acid biosynthesis; L-leucine biosynthesis; L-leucine from 3-methyl-2-oxobutanoate: step 2/4. Catalyzes the isomerization between 2-isopropylmalate and 3-isopropylmalate, via the formation of 2-isopropylmaleate. This chain is 3-isopropylmalate dehydratase large subunit, found in Escherichia coli O17:K52:H18 (strain UMN026 / ExPEC).